The sequence spans 698 residues: DNA ligase (698 aa).

NAD(+) contacts are provided by residues 35-39 (DSVYD), 84-85 (SL), and glutamate 123. The N6-AMP-lysine intermediate role is filled by lysine 125. NAD(+)-binding residues include arginine 146, glutamate 183, lysine 302, and lysine 326. Residues cysteine 420, cysteine 423, cysteine 438, and cysteine 443 each coordinate Zn(2+). Residues 612–698 (NGKGHLNGQT…QNSADTIHLL (87 aa)) form the BRCT domain.

It belongs to the NAD-dependent DNA ligase family. LigA subfamily. The cofactor is Mg(2+). Requires Mn(2+) as cofactor.

It catalyses the reaction NAD(+) + (deoxyribonucleotide)n-3'-hydroxyl + 5'-phospho-(deoxyribonucleotide)m = (deoxyribonucleotide)n+m + AMP + beta-nicotinamide D-nucleotide.. Its function is as follows. DNA ligase that catalyzes the formation of phosphodiester linkages between 5'-phosphoryl and 3'-hydroxyl groups in double-stranded DNA using NAD as a coenzyme and as the energy source for the reaction. It is essential for DNA replication and repair of damaged DNA. The chain is DNA ligase from Synechococcus sp. (strain WH7803).